We begin with the raw amino-acid sequence, 144 residues long: Nucleoside diphosphate kinase (144 aa).

6 residues coordinate ATP: Lys-9, Phe-57, Arg-85, Thr-91, Arg-102, and Asn-112. The Pros-phosphohistidine intermediate role is filled by His-120.

Belongs to the NDK family. As to quaternary structure, homotetramer. It depends on Mg(2+) as a cofactor.

The protein localises to the cytoplasm. The enzyme catalyses a 2'-deoxyribonucleoside 5'-diphosphate + ATP = a 2'-deoxyribonucleoside 5'-triphosphate + ADP. It catalyses the reaction a ribonucleoside 5'-diphosphate + ATP = a ribonucleoside 5'-triphosphate + ADP. Major role in the synthesis of nucleoside triphosphates other than ATP. The ATP gamma phosphate is transferred to the NDP beta phosphate via a ping-pong mechanism, using a phosphorylated active-site intermediate. The polypeptide is Nucleoside diphosphate kinase (Streptococcus uberis (strain ATCC BAA-854 / 0140J)).